The following is an 839-amino-acid chain: Taste receptor type 1 member 2 (839 aa).

A signal peptide spans 1–19 (MRPRATTICSLFFLLRVLA). The Extracellular portion of the chain corresponds to 20–566 (EPAKNSDFYL…AFLEWHEAPT (547 aa)). N-linked (GlcNAc...) asparagine glycans are attached at residues asparagine 84, asparagine 127, asparagine 248, asparagine 292, asparagine 312, asparagine 368, asparagine 428, asparagine 487, and asparagine 527. A helical membrane pass occupies residues 567-587 (IVVALLAALGFLSTLAILVIF). Topologically, residues 588 to 602 (WRHFQTPMVRSAGGP) are cytoplasmic. The chain crosses the membrane as a helical span at residues 603–623 (MCFLMLTLLLVAYMVVPVYVG). The Extracellular portion of the chain corresponds to 624-635 (PPKVSTCFCRQA). A helical transmembrane segment spans residues 636 to 656 (LFPLCFTICISCIAVRSFQIV). Residues 657–681 (CVFKMASRFPRAYSYWVRYQGPYVS) are Cytoplasmic-facing. The helical transmembrane segment at 682–702 (MAFITVLKMVTVVIGMLATGL) threads the bilayer. The Extracellular portion of the chain corresponds to 703-727 (NPTTRIDPDDPKIMIVSCNPNYRNS). A helical membrane pass occupies residues 728–748 (LFFNTGLDLLLSVVGFSFAYM). At 749–760 (GKELPTNYNEAK) the chain is on the cytoplasmic side. The helical transmembrane segment at 761–781 (FITLSMTFYFTSSVSLCTFMS) threads the bilayer. At 782–784 (AYN) the chain is on the extracellular side. Residues 785–805 (GVLVTIMDLLVTVLNLLAISL) traverse the membrane as a helical segment. At 806 to 839 (GYFGPKCYMILFYPERNTPAYFNSMIQGYTMRRD) the chain is on the cytoplasmic side.

Belongs to the G-protein coupled receptor 3 family. TAS1R subfamily. In terms of assembly, forms heterodimers with TAS1R3.

Its subcellular location is the cell membrane. Its function is as follows. Putative taste receptor. TAS1R2/TAS1R3 recognizes diverse natural and synthetic sweeteners. This chain is Taste receptor type 1 member 2 (TAS1R2), found in Macaca mulatta (Rhesus macaque).